The sequence spans 355 residues: 3-dehydroquinate synthase (355 aa).

Residues 71–76, 105–109, 129–130, K142, K151, and 169–172 each bind NAD(+); these read EGEASK, GVVGD, TS, and TLKT. The Zn(2+) site is built by E184, H246, and H263.

It belongs to the sugar phosphate cyclases superfamily. Dehydroquinate synthase family. Co(2+) serves as cofactor. Zn(2+) is required as a cofactor. The cofactor is NAD(+).

It localises to the cytoplasm. It catalyses the reaction 7-phospho-2-dehydro-3-deoxy-D-arabino-heptonate = 3-dehydroquinate + phosphate. It participates in metabolic intermediate biosynthesis; chorismate biosynthesis; chorismate from D-erythrose 4-phosphate and phosphoenolpyruvate: step 2/7. Its function is as follows. Catalyzes the conversion of 3-deoxy-D-arabino-heptulosonate 7-phosphate (DAHP) to dehydroquinate (DHQ). This Streptococcus suis (strain 98HAH33) protein is 3-dehydroquinate synthase.